Reading from the N-terminus, the 106-residue chain is Small ribosomal subunit protein bS18 (106 aa).

The segment at 1 to 41 is disordered; it reads MAEEHSNQRSQTFNGERTNRPSRKPRGDGERRGRRQGGRRR.

This sequence belongs to the bacterial ribosomal protein bS18 family. Part of the 30S ribosomal subunit. Forms a tight heterodimer with protein bS6.

Functionally, binds as a heterodimer with protein bS6 to the central domain of the 16S rRNA, where it helps stabilize the platform of the 30S subunit. The chain is Small ribosomal subunit protein bS18 from Oenococcus oeni (strain ATCC BAA-331 / PSU-1).